We begin with the raw amino-acid sequence, 119 residues long: U-scoloptoxin(16)-Er11a (119 aa).

The signal sequence occupies residues 1–19; that stretch reads MKSWTAAVLSLGLIYLSIS.

It belongs to the scoloptoxin-16 family. Contains 4 disulfide bonds. Expressed by the venom gland.

Its subcellular location is the secreted. In Ethmostigmus rubripes (Giant centipede), this protein is U-scoloptoxin(16)-Er11a.